A 324-amino-acid polypeptide reads, in one-letter code: Acetyl-coenzyme A carboxylase carboxyl transferase subunit alpha (324 aa).

In terms of domain architecture, CoA carboxyltransferase C-terminal spans 37–291; it reads KLDKRLDRLK…QEYVLQEWVK (255 aa).

Belongs to the AccA family. As to quaternary structure, acetyl-CoA carboxylase is a heterohexamer composed of biotin carboxyl carrier protein (AccB), biotin carboxylase (AccC) and two subunits each of ACCase subunit alpha (AccA) and ACCase subunit beta (AccD).

Its subcellular location is the cytoplasm. It carries out the reaction N(6)-carboxybiotinyl-L-lysyl-[protein] + acetyl-CoA = N(6)-biotinyl-L-lysyl-[protein] + malonyl-CoA. It participates in lipid metabolism; malonyl-CoA biosynthesis; malonyl-CoA from acetyl-CoA: step 1/1. Component of the acetyl coenzyme A carboxylase (ACC) complex. First, biotin carboxylase catalyzes the carboxylation of biotin on its carrier protein (BCCP) and then the CO(2) group is transferred by the carboxyltransferase to acetyl-CoA to form malonyl-CoA. The polypeptide is Acetyl-coenzyme A carboxylase carboxyl transferase subunit alpha (Chlamydia trachomatis serovar L2 (strain ATCC VR-902B / DSM 19102 / 434/Bu)).